Here is a 194-residue protein sequence, read N- to C-terminus: Cysteine and glycine-rich protein 2 (194 aa).

In terms of domain architecture, LIM zinc-binding 1 spans 10 to 61; it reads CGACGRTVYHAEEVQCDGRSFHRCCFLCMVCRKNLDSTTVAIHDAEVYCKSC. The Nuclear localization signal motif lies at 64–69; it reads KKYGPK. The tract at residues 85-110 is disordered; sequence GERLGIKPESSPSPHRPTTNPNTSKF. Polar residues predominate over residues 94–110; that stretch reads SSPSPHRPTTNPNTSKF. The region spanning 120-171 is the LIM zinc-binding 2 domain; it reads CSRCGDSVYAAEKVIGAGKPWHKNCFRCAKCGKSLESTTLTEKEGEIYCKGC.

The protein resides in the nucleus. Functionally, interacts with zyxin. May be a component of a signal transduction pathway that mediates adhesion-stimulated changes in gene expression. Totally down-regulated in transformed cells. This is Cysteine and glycine-rich protein 2 (CSRP2) from Coturnix japonica (Japanese quail).